Here is a 1786-residue protein sequence, read N- to C-terminus: Laminin subunit beta-1 (1786 aa).

The first 21 residues, Met-1 to Ala-21, serve as a signal peptide directing secretion. Residues Ala-31–Asn-270 form the Laminin N-terminal domain. Asn-120 carries an N-linked (GlcNAc...) asparagine glycan. Ser-250 carries the post-translational modification Phosphoserine. Disulfide bonds link Cys-271–Cys-280, Cys-273–Cys-298, Cys-300–Cys-309, Cys-312–Cys-332, Cys-335–Cys-344, Cys-337–Cys-362, Cys-365–Cys-374, Cys-377–Cys-395, Cys-398–Cys-411, Cys-400–Cys-426, Cys-428–Cys-437, Cys-440–Cys-455, Cys-458–Cys-472, Cys-460–Cys-479, Cys-481–Cys-490, Cys-493–Cys-507, Cys-510–Cys-522, Cys-512–Cys-529, and Cys-531–Cys-540. 4 Laminin EGF-like domains span residues Cys-271–Lys-334, Cys-335–Pro-397, Cys-398–Ser-457, and Cys-458–Pro-509. Asn-356 carries an N-linked (GlcNAc...) asparagine glycan. The Laminin EGF-like 5; truncated domain maps to Cys-510–Cys-540. Asn-519 carries an N-linked (GlcNAc...) asparagine glycan. Positions Phe-549–His-767 constitute a Laminin IV type B domain. N-linked (GlcNAc...) asparagine glycosylation is present at Asn-677. 32 cysteine pairs are disulfide-bonded: Cys-773/Cys-785, Cys-775/Cys-792, Cys-794/Cys-803, Cys-806/Cys-818, Cys-821/Cys-833, Cys-823/Cys-840, Cys-842/Cys-851, Cys-854/Cys-864, Cys-867/Cys-876, Cys-869/Cys-883, Cys-886/Cys-895, Cys-898/Cys-914, Cys-917/Cys-933, Cys-919/Cys-944, Cys-946/Cys-955, Cys-958/Cys-973, Cys-976/Cys-990, Cys-978/Cys-997, Cys-1000/Cys-1009, Cys-1012/Cys-1025, Cys-1028/Cys-1040, Cys-1030/Cys-1054, Cys-1056/Cys-1065, Cys-1068/Cys-1081, Cys-1084/Cys-1096, Cys-1086/Cys-1103, Cys-1105/Cys-1114, Cys-1117/Cys-1129, Cys-1132/Cys-1144, Cys-1134/Cys-1151, Cys-1153/Cys-1162, and Cys-1165/Cys-1176. 8 Laminin EGF-like domains span residues Cys-773–Pro-820, Cys-821–Pro-866, Cys-867–Pro-916, Cys-917–Pro-975, Cys-976–Lys-1027, Cys-1028–Pro-1083, Cys-1084–Ala-1131, and Cys-1132–Pro-1178. Asn-1041 carries an N-linked (GlcNAc...) asparagine glycan. Residues Cys-1179–Thr-1397 form a domain II region. Asn-1195, Asn-1279, Asn-1336, and Asn-1343 each carry an N-linked (GlcNAc...) asparagine glycan. Residues Tyr-1216–Gln-1315 adopt a coiled-coil conformation. Residues Lys-1368–Leu-1388 are a coiled coil. Positions Cys-1398–Cys-1430 are domain alpha. The tract at residues Gly-1431–Leu-1786 is domain I. A coiled-coil region spans residues Asp-1448–Lys-1778. An N-linked (GlcNAc...) asparagine glycan is attached at Asn-1487. At Ser-1496 the chain carries Phosphoserine. N-linked (GlcNAc...) asparagine glycans are attached at residues Asn-1542 and Asn-1643. Ser-1666 carries the post-translational modification Phosphoserine.

In terms of assembly, laminin is a complex glycoprotein, consisting of three different polypeptide chains (alpha, beta, gamma), which are bound to each other by disulfide bonds into a cross-shaped molecule comprising one long and three short arms with globules at each end. Beta-1 is a subunit of laminin-1 (laminin-111 or EHS laminin), laminin-2 (laminin-211 or merosin), laminin-6 (laminin-311 or K-laminin), laminin-8 (laminin-411), laminin-10 (laminin-511) and laminin-12 (laminin-213). Interacts with ITGB1. Widely expressed in the embryo. High levels are detected in the cerebellar basement membrane, at postnatal day 7.

It localises to the secreted. Its subcellular location is the extracellular space. The protein localises to the extracellular matrix. The protein resides in the basement membrane. Its function is as follows. Binding to cells via a high affinity receptor, laminin is thought to mediate the attachment, migration and organization of cells into tissues during embryonic development by interacting with other extracellular matrix components. Involved in the organization of the laminar architecture of the cerebral cortex. It is probably required for the integrity of the basement membrane/glia limitans that serves as an anchor point for the endfeet of radial glial cells and as a physical barrier to migrating neurons. Radial glial cells play a central role in cerebral cortical development, where they act both as the proliferative unit of the cerebral cortex and a scaffold for neurons migrating toward the pial surface. This is Laminin subunit beta-1 (Lamb1) from Mus musculus (Mouse).